A 440-amino-acid polypeptide reads, in one-letter code: Ribulose bisphosphate carboxylase large chain (440 aa).

Lysine 3 is modified (N6,N6,N6-trimethyllysine). Substrate-binding residues include asparagine 112 and threonine 162. Residue lysine 164 is the Proton acceptor of the active site. Lysine 166 serves as a coordination point for substrate. Residues lysine 190, aspartate 192, and glutamate 193 each coordinate Mg(2+). An N6-carboxylysine modification is found at lysine 190. The active-site Proton acceptor is the histidine 283. Substrate is bound by residues arginine 284, histidine 316, and serine 368.

It belongs to the RuBisCO large chain family. Type I subfamily. As to quaternary structure, heterohexadecamer of 8 large chains and 8 small chains; disulfide-linked. The disulfide link is formed within the large subunit homodimers. Requires Mg(2+) as cofactor. Post-translationally, the disulfide bond which can form in the large chain dimeric partners within the hexadecamer appears to be associated with oxidative stress and protein turnover.

It localises to the plastid. Its subcellular location is the chloroplast. It carries out the reaction 2 (2R)-3-phosphoglycerate + 2 H(+) = D-ribulose 1,5-bisphosphate + CO2 + H2O. The enzyme catalyses D-ribulose 1,5-bisphosphate + O2 = 2-phosphoglycolate + (2R)-3-phosphoglycerate + 2 H(+). In terms of biological role, ruBisCO catalyzes two reactions: the carboxylation of D-ribulose 1,5-bisphosphate, the primary event in carbon dioxide fixation, as well as the oxidative fragmentation of the pentose substrate in the photorespiration process. Both reactions occur simultaneously and in competition at the same active site. The sequence is that of Ribulose bisphosphate carboxylase large chain from Bambusa multiplex (Hedge bamboo).